The primary structure comprises 426 residues: mRNA cap guanine-N(7) methyltransferase (426 aa).

Positions 138–421 constitute an mRNA cap 0 methyltransferase domain; sequence SPIIKLRNFN…FYTTFAFRKV (284 aa). MRNA is bound at residue 147-148; the sequence is NN. Lys-151, Ala-169, Asp-191, Asp-220, Gln-246, and Tyr-251 together coordinate S-adenosyl-L-methionine.

It belongs to the class I-like SAM-binding methyltransferase superfamily. mRNA cap 0 methyltransferase family.

It localises to the nucleus. The enzyme catalyses a 5'-end (5'-triphosphoguanosine)-ribonucleoside in mRNA + S-adenosyl-L-methionine = a 5'-end (N(7)-methyl 5'-triphosphoguanosine)-ribonucleoside in mRNA + S-adenosyl-L-homocysteine. Responsible for methylating the 5'-cap structure of mRNAs. In Kluyveromyces lactis (strain ATCC 8585 / CBS 2359 / DSM 70799 / NBRC 1267 / NRRL Y-1140 / WM37) (Yeast), this protein is mRNA cap guanine-N(7) methyltransferase (ABD1).